We begin with the raw amino-acid sequence, 212 residues long: Cytidylate kinase (212 aa).

9–17 (GPAAAGKGT) serves as a coordination point for ATP.

Belongs to the cytidylate kinase family. Type 1 subfamily.

The protein resides in the cytoplasm. The enzyme catalyses CMP + ATP = CDP + ADP. The catalysed reaction is dCMP + ATP = dCDP + ADP. This is Cytidylate kinase from Rhizobium meliloti (strain 1021) (Ensifer meliloti).